Here is a 734-residue protein sequence, read N- to C-terminus: Photosystem I P700 chlorophyll a apoprotein A2 (734 aa).

Helical transmembrane passes span 46–69 (IFAS…FHVA), 135–158 (LYTG…LHLQ), 175–199 (LNHH…HVAI), 273–291 (MAHH…GHMY), 330–353 (LHFQ…QHMY), 369–395 (AALY…IFFI), 417–439 (AIIS…LYVH), and 517–535 (FLVH…LILV). Residues cysteine 559 and cysteine 568 each contribute to the [4Fe-4S] cluster site. 2 helical membrane-spanning segments follow: residues 575 to 596 (AFYL…YWHW) and 643 to 665 (LSVW…MFLI). Residues histidine 654, methionine 662, and tyrosine 670 each contribute to the chlorophyll a site. Position 671 (tryptophan 671) interacts with phylloquinone. Residues 707–727 (LVGLAHFSVGYIFTYAAFLIA) traverse the membrane as a helical segment.

The protein belongs to the PsaA/PsaB family. The PsaA/B heterodimer binds the P700 chlorophyll special pair and subsequent electron acceptors. PSI consists of a core antenna complex that captures photons, and an electron transfer chain that converts photonic excitation into a charge separation. The eukaryotic PSI reaction center is composed of at least 11 subunits. P700 is a chlorophyll a/chlorophyll a' dimer, A0 is one or more chlorophyll a, A1 is one or both phylloquinones and FX is a shared 4Fe-4S iron-sulfur center. is required as a cofactor.

The protein resides in the plastid. It localises to the chloroplast thylakoid membrane. The catalysed reaction is reduced [plastocyanin] + hnu + oxidized [2Fe-2S]-[ferredoxin] = oxidized [plastocyanin] + reduced [2Fe-2S]-[ferredoxin]. PsaA and PsaB bind P700, the primary electron donor of photosystem I (PSI), as well as the electron acceptors A0, A1 and FX. PSI is a plastocyanin-ferredoxin oxidoreductase, converting photonic excitation into a charge separation, which transfers an electron from the donor P700 chlorophyll pair to the spectroscopically characterized acceptors A0, A1, FX, FA and FB in turn. Oxidized P700 is reduced on the lumenal side of the thylakoid membrane by plastocyanin. In Cucumis sativus (Cucumber), this protein is Photosystem I P700 chlorophyll a apoprotein A2.